Here is a 96-residue protein sequence, read N- to C-terminus: Co-chaperonin GroES (96 aa).

This sequence belongs to the GroES chaperonin family. In terms of assembly, heptamer of 7 subunits arranged in a ring. Interacts with the chaperonin GroEL.

The protein resides in the cytoplasm. Its function is as follows. Together with the chaperonin GroEL, plays an essential role in assisting protein folding. The GroEL-GroES system forms a nano-cage that allows encapsulation of the non-native substrate proteins and provides a physical environment optimized to promote and accelerate protein folding. GroES binds to the apical surface of the GroEL ring, thereby capping the opening of the GroEL channel. The sequence is that of Co-chaperonin GroES from Buchnera aphidicola subsp. Acyrthosiphon pisum (strain 5A).